A 465-amino-acid chain; its full sequence is Chromosomal replication initiator protein DnaA (465 aa).

The interval 1-87 (MLWTDCLTRL…RPGSILSSSE (87 aa)) is domain I, interacts with DnaA modulators. Residues 81 to 123 (SILSSSEQPATTTAALQTAPIPQPAKVKREPEPVANTAVSSKS) are disordered. Residues 88–100 (QPATTTAALQTAP) are compositionally biased toward low complexity. Residues 88–127 (QPATTTAALQTAPIPQPAKVKREPEPVANTAVSSKSSKKK) are domain II. The interval 128–345 (LLNPQFTFSL…GALNKVVAIS (218 aa)) is domain III, AAA+ region. ATP-binding residues include Gly173, Gly175, Lys176, and Thr177. The domain IV, binds dsDNA stretch occupies residues 346–465 (RFKGAPIDLD…YKNLLRLLQS (120 aa)).

It belongs to the DnaA family. In terms of assembly, oligomerizes as a right-handed, spiral filament on DNA at oriC.

It is found in the cytoplasm. In terms of biological role, plays an essential role in the initiation and regulation of chromosomal replication. ATP-DnaA binds to the origin of replication (oriC) to initiate formation of the DNA replication initiation complex once per cell cycle. Binds the DnaA box (a 9 base pair repeat at the origin) and separates the double-stranded (ds)DNA. Forms a right-handed helical filament on oriC DNA; dsDNA binds to the exterior of the filament while single-stranded (ss)DNA is stabiized in the filament's interior. The ATP-DnaA-oriC complex binds and stabilizes one strand of the AT-rich DNA unwinding element (DUE), permitting loading of DNA polymerase. After initiation quickly degrades to an ADP-DnaA complex that is not apt for DNA replication. Binds acidic phospholipids. The protein is Chromosomal replication initiator protein DnaA of Acinetobacter baumannii (strain AB307-0294).